Consider the following 223-residue polypeptide: Thiamine-phosphate synthase (223 aa).

4-amino-2-methyl-5-(diphosphooxymethyl)pyrimidine-binding positions include 45 to 49 (QYREK) and Asn77. 2 residues coordinate Mg(2+): Asp78 and Asp97. 4-amino-2-methyl-5-(diphosphooxymethyl)pyrimidine is bound at residue Thr116. Position 142-144 (142-144 (SYT)) interacts with 2-[(2R,5Z)-2-carboxy-4-methylthiazol-5(2H)-ylidene]ethyl phosphate. Lys145 is a 4-amino-2-methyl-5-(diphosphooxymethyl)pyrimidine binding site. 2-[(2R,5Z)-2-carboxy-4-methylthiazol-5(2H)-ylidene]ethyl phosphate contacts are provided by residues Gly173 and 193-194 (VT).

It belongs to the thiamine-phosphate synthase family. Mg(2+) is required as a cofactor.

It carries out the reaction 2-[(2R,5Z)-2-carboxy-4-methylthiazol-5(2H)-ylidene]ethyl phosphate + 4-amino-2-methyl-5-(diphosphooxymethyl)pyrimidine + 2 H(+) = thiamine phosphate + CO2 + diphosphate. It catalyses the reaction 2-(2-carboxy-4-methylthiazol-5-yl)ethyl phosphate + 4-amino-2-methyl-5-(diphosphooxymethyl)pyrimidine + 2 H(+) = thiamine phosphate + CO2 + diphosphate. The catalysed reaction is 4-methyl-5-(2-phosphooxyethyl)-thiazole + 4-amino-2-methyl-5-(diphosphooxymethyl)pyrimidine + H(+) = thiamine phosphate + diphosphate. The protein operates within cofactor biosynthesis; thiamine diphosphate biosynthesis; thiamine phosphate from 4-amino-2-methyl-5-diphosphomethylpyrimidine and 4-methyl-5-(2-phosphoethyl)-thiazole: step 1/1. Condenses 4-methyl-5-(beta-hydroxyethyl)thiazole monophosphate (THZ-P) and 2-methyl-4-amino-5-hydroxymethyl pyrimidine pyrophosphate (HMP-PP) to form thiamine monophosphate (TMP). The polypeptide is Thiamine-phosphate synthase (Dictyoglomus thermophilum (strain ATCC 35947 / DSM 3960 / H-6-12)).